A 440-amino-acid polypeptide reads, in one-letter code: MFLAQEIIRKKRDGHALSDEEIRFFINGIRDNTISEGQIAALAMTIFFHDMTMPERVSLTMAMRDSGTVLDWKSLHLNGPIVDKHSTGGVGDVTSLMLGPMVAACGGYIPMISGRGLGHTGGTLDKLESIPGFDIFPDDNRFREIIKDVGVAIIGQTSSLAPADKRFYATRDITATVDSIPLITASILAKKLAEGLDALVMDVKVGSGAFMPTYELSEALAEAIVGVANGAGVRTTALLTDMNQVLASSAGNAVEVREAVQFLTGEYRNPRLFDVTMALCVEMLISGKLAKDDAEARAKLQAVLDNGKAAEVFGRMVAAQKGPTDFVENYAKYLPTAMLTKAVYADTEGFVSEMDTRALGMAVVAMGGGRRQASDTIDYSVGFTDMARLGDQVDGQRPLAVILAKDENSWQEAAKAVKAAIKLADNAPESTPTVYRRISE.

It belongs to the thymidine/pyrimidine-nucleoside phosphorylase family. As to quaternary structure, homodimer.

The catalysed reaction is thymidine + phosphate = 2-deoxy-alpha-D-ribose 1-phosphate + thymine. Its pathway is pyrimidine metabolism; dTMP biosynthesis via salvage pathway; dTMP from thymine: step 1/2. The enzymes which catalyze the reversible phosphorolysis of pyrimidine nucleosides are involved in the degradation of these compounds and in their utilization as carbon and energy sources, or in the rescue of pyrimidine bases for nucleotide synthesis. This is Thymidine phosphorylase from Shigella flexneri serotype 5b (strain 8401).